A 314-amino-acid polypeptide reads, in one-letter code: Ferric-anguibactin transport system permease protein FatD (314 aa).

10 helical membrane-spanning segments follow: residues 1-21 (MTFRMILAFFTLCATSLFFGA), 49-69 (VALILTGSGLAMCGVILQHIV), 76-96 (PGTTGSLDAAKLGILVSIVML), 103-123 (ERMFFAVLFCFAAGLVYIAII), 132-152 (ALVPVIGLMFGSVLSALAEFY), 180-200 (IIFLILPITLLTYLYAHRFTV), 207-226 (IASNLGISYAMTAALGLILV), 230-252 (VAVTVVTVGAIHFVGLVIPNLVA), 265-285 (IVALGGASLLIFCDVISRVVL), and 288-308 (FEVPVGLTASAVGGVMFLAFL).

Belongs to the binding-protein-dependent transport system permease family. FecCD subfamily. In terms of assembly, part of an iron transport system composed of the outer membrane receptor FatA, the periplasmic binding protein FatB and the inner membrane proteins FatC and FatD.

The protein resides in the cell inner membrane. Involved in the uptake of iron in complex with the siderophore anguibactin. Responsible for the translocation of ferric-anguibactin across the cytoplasmic membrane. This chain is Ferric-anguibactin transport system permease protein FatD, found in Vibrio anguillarum (strain ATCC 68554 / 775) (Listonella anguillarum).